Here is a 295-residue protein sequence, read N- to C-terminus: Pyridoxal 5'-phosphate synthase subunit PdxS (295 aa).

Asp25 is a binding site for D-ribose 5-phosphate. Catalysis depends on Lys82, which acts as the Schiff-base intermediate with D-ribose 5-phosphate. Residue Gly154 participates in D-ribose 5-phosphate binding. Arg166 contributes to the D-glyceraldehyde 3-phosphate binding site. D-ribose 5-phosphate is bound by residues Gly215 and 236–237 (GS).

It belongs to the PdxS/SNZ family. In terms of assembly, in the presence of PdxT, forms a dodecamer of heterodimers.

It carries out the reaction aldehydo-D-ribose 5-phosphate + D-glyceraldehyde 3-phosphate + L-glutamine = pyridoxal 5'-phosphate + L-glutamate + phosphate + 3 H2O + H(+). It participates in cofactor biosynthesis; pyridoxal 5'-phosphate biosynthesis. Its function is as follows. Catalyzes the formation of pyridoxal 5'-phosphate from ribose 5-phosphate (RBP), glyceraldehyde 3-phosphate (G3P) and ammonia. The ammonia is provided by the PdxT subunit. Can also use ribulose 5-phosphate and dihydroxyacetone phosphate as substrates, resulting from enzyme-catalyzed isomerization of RBP and G3P, respectively. The protein is Pyridoxal 5'-phosphate synthase subunit PdxS of Staphylococcus carnosus (strain TM300).